Here is a 275-residue protein sequence, read N- to C-terminus: MRKIALKVAYIGTNYHGFQRQPDVPTVEGKLLEALEGAGIIEDPKRARFQIAGRTDRGVHALGNFVSFFTEEDIHVNQINDLLPRDIRVLAWASVMYPFKVRYPLERHYRYILHREESMDTYSMAEAAAHFRGTHDFSNFSRRSDRDPVRRINDVRISEVGDSIIIDVYGESFLWQMVRKMVRALLMVSEGELAPDDMAGLLDTDRRVFLEPMPPENLILMDLKYGVKIKLRHDEYAFKRFISLLEEEFKVYREMSMVRRAMSDHLRDLQEHELD.

The active-site Nucleophile is Asp56. Substrate is bound at residue Tyr109.

It belongs to the tRNA pseudouridine synthase TruA family.

The catalysed reaction is uridine(38/39/40) in tRNA = pseudouridine(38/39/40) in tRNA. Its function is as follows. Formation of pseudouridine at positions 38, 39 and 40 in the anticodon stem and loop of transfer RNAs. In Methanothermobacter thermautotrophicus (strain ATCC 29096 / DSM 1053 / JCM 10044 / NBRC 100330 / Delta H) (Methanobacterium thermoautotrophicum), this protein is tRNA pseudouridine synthase A.